The sequence spans 603 residues: Beta-hexosaminidase (603 aa).

Residues 1 to 19 form the signal peptide; sequence MAYFRLYAVLLAVASSVAA. Active-site charge relay system residues include Asp225, His278, and Glu349. Cysteines 293 and 354 form a disulfide. N-linked (GlcNAc...) asparagine glycosylation occurs at Asn356. Cys451 and Cys486 are joined by a disulfide. Asn503 and Asn528 each carry an N-linked (GlcNAc...) asparagine glycan. An intrachain disulfide couples Cys586 to Cys593.

This sequence belongs to the glycosyl hydrolase 20 family. Homodimer.

It localises to the secreted. It carries out the reaction Hydrolysis of terminal non-reducing N-acetyl-D-hexosamine residues in N-acetyl-beta-D-hexosaminides.. Part of the binary chitinolytic system. Involved in hydrolysis of chitobiose and higher chito-oligomers (produced from cell wall chitin by endochitinases), thus contributing to the formation of germ tubes, fruit-bodies and septa during hyphenation. Hydrolyzes synthetic substrates p-nitrophenyl-beta-N-acetyl-glucosamine (pNP-beta-GlcNAc), p-nitrophenyl-beta-N-acetyl-galactosamine (pNP-beta-GalNAc) and 5-bromo-4-chloro-3-indoyl-beta-D-N-glucosaminide (X-GlcNAc). The polypeptide is Beta-hexosaminidase (Emericella nidulans (Aspergillus nidulans)).